The following is a 423-amino-acid chain: Serine hydroxymethyltransferase (423 aa).

Glycine 119 to isoleucine 121 contacts (6S)-5,6,7,8-tetrahydrofolate. Lysine 225 carries the post-translational modification N6-(pyridoxal phosphate)lysine.

It belongs to the SHMT family. As to quaternary structure, homodimer. It depends on pyridoxal 5'-phosphate as a cofactor.

The protein localises to the cytoplasm. It carries out the reaction (6R)-5,10-methylene-5,6,7,8-tetrahydrofolate + glycine + H2O = (6S)-5,6,7,8-tetrahydrofolate + L-serine. The protein operates within one-carbon metabolism; tetrahydrofolate interconversion. It participates in amino-acid biosynthesis; glycine biosynthesis; glycine from L-serine: step 1/1. Catalyzes the reversible interconversion of serine and glycine with tetrahydrofolate (THF) serving as the one-carbon carrier. Also exhibits THF-independent aldolase activity toward beta-hydroxyamino acids, producing glycine and aldehydes, via a retro-aldol mechanism. The sequence is that of Serine hydroxymethyltransferase from Methanocella arvoryzae (strain DSM 22066 / NBRC 105507 / MRE50).